We begin with the raw amino-acid sequence, 422 residues long: Glutamyl-tRNA reductase (422 aa).

Residues 49 to 52, serine 108, 113 to 115, and glutamine 119 contribute to the substrate site; these read TCNR and EPQ. Cysteine 50 serves as the catalytic Nucleophile. 188–193 contributes to the NADP(+) binding site; the sequence is GAGQTI.

It belongs to the glutamyl-tRNA reductase family. As to quaternary structure, homodimer.

The enzyme catalyses (S)-4-amino-5-oxopentanoate + tRNA(Glu) + NADP(+) = L-glutamyl-tRNA(Glu) + NADPH + H(+). It participates in porphyrin-containing compound metabolism; protoporphyrin-IX biosynthesis; 5-aminolevulinate from L-glutamyl-tRNA(Glu): step 1/2. Its function is as follows. Catalyzes the NADPH-dependent reduction of glutamyl-tRNA(Glu) to glutamate 1-semialdehyde (GSA). The protein is Glutamyl-tRNA reductase of Marinomonas sp. (strain MWYL1).